Consider the following 509-residue polypeptide: Solute carrier family 2, facilitated glucose transporter member 4 (509 aa).

Residues 1 to 24 (MPSGFQQIGSEDGEPPQQRVTGTL) lie on the Cytoplasmic side of the membrane. The interval 7 to 13 (QIGSEDG) is interaction with SRFBP1. Ser10 is modified (phosphoserine). The chain crosses the membrane as a helical span at residues 25-45 (VLAVFSAVLGSLQFGYNIGVI). Topologically, residues 46-81 (NAPQKVIEQSYNETWLGRQGPEGPSSIPPGTLTTLW) are extracellular. An N-linked (GlcNAc...) asparagine glycan is attached at Asn57. The helical transmembrane segment at 82–102 (ALSVAIFSVGGMISSFLIGII) threads the bilayer. Topologically, residues 103–111 (SQWLGRKRA) are cytoplasmic. A helical membrane pass occupies residues 112-132 (MLVNNVLAVLGGSLMGLANAA). Over 133 to 142 (ASYEMLILGR) the chain is Extracellular. A helical transmembrane segment spans residues 143 to 163 (FLIGAYSGLTSGLVPMYVGEI). Topologically, residues 164-171 (APTHLRGA) are cytoplasmic. A helical membrane pass occupies residues 172 to 192 (LGTLNQLAIVIGILIAQVLGL). Gln177 lines the D-glucose pocket. Residues 193 to 201 (ESLLGTASL) are Extracellular-facing. The helical transmembrane segment at 202–222 (WPLLLGLTVLPALLQLVLLPF) threads the bilayer. Residue Cys223 is the site of S-palmitoyl cysteine attachment. Residues 223–287 (CPESPRYLYI…LLGSRTHRQP (65 aa)) lie on the Cytoplasmic side of the membrane. Ser274 bears the Phosphoserine; by SGK1 mark. Residues 288-308 (LIIAVVLQLSQQLSGINAVFY) traverse the membrane as a helical segment. Residues 298–299 (QQ) and Asn304 contribute to the D-glucose site. Over 309-323 (YSTSIFETAGVGQPA) the chain is Extracellular. The chain crosses the membrane as a helical span at residues 324–344 (YATIGAGVVNTVFTLVSVLLV). Residue Asn333 participates in D-glucose binding. The Cytoplasmic portion of the chain corresponds to 345-353 (ERAGRRTLH). The chain crosses the membrane as a helical span at residues 354 to 374 (LLGLAGMCGCAILMTVALLLL). At 375 to 384 (ERVPAMSYVS) the chain is on the extracellular side. The helical transmembrane segment at 385–405 (IVAIFGFVAFFEIGPGPIPWF) threads the bilayer. Glu396 and Trp404 together coordinate D-glucose. At 406–417 (IVAELFSQGPRP) the chain is on the cytoplasmic side. The chain crosses the membrane as a helical span at residues 418–438 (AAMAVAGFSNWTSNFIIGMGF). Residues 439 to 445 (QYVAEAM) lie on the Extracellular side of the membrane. A helical membrane pass occupies residues 446-466 (GPYVFLLFAVLLLGFFIFTFL). The Cytoplasmic segment spans residues 467 to 509 (RVPETRGRTFDQISAAFHRTPSLLEQEVKPSTELEYLGPDEND). Thr486 is subject to Phosphothreonine. Ser488 is modified (phosphoserine). A Dileucine internalization motif motif is present at residues 489–490 (LL).

This sequence belongs to the major facilitator superfamily. Sugar transporter (TC 2.A.1.1) family. Glucose transporter subfamily. In terms of assembly, interacts with NDUFA9. Binds to DAXX. Interacts via its N-terminus with SRFBP1. Interacts with TRARG1; the interaction is required for proper SLC2A4 recycling after insulin stimulation. Post-translationally, sumoylated. Palmitoylated. Palmitoylation by ZDHHC7 controls the insulin-dependent translocation of GLUT4 to the plasma membrane. As to expression, skeletal and cardiac muscles; brown and white fat.

It is found in the cell membrane. Its subcellular location is the endomembrane system. It localises to the cytoplasm. The protein resides in the perinuclear region. It carries out the reaction D-glucose(out) = D-glucose(in). Insulin-regulated facilitative glucose transporter, which plays a key role in removal of glucose from circulation. Response to insulin is regulated by its intracellular localization: in the absence of insulin, it is efficiently retained intracellularly within storage compartments in muscle and fat cells. Upon insulin stimulation, translocates from these compartments to the cell surface where it transports glucose from the extracellular milieu into the cell. This is Solute carrier family 2, facilitated glucose transporter member 4 from Homo sapiens (Human).